The chain runs to 539 residues: Chaperonin GroEL (539 aa).

ATP contacts are provided by residues 30 to 33 (TLGP), lysine 51, 87 to 91 (DGTTT), glycine 415, 479 to 481 (NAA), and aspartate 495.

This sequence belongs to the chaperonin (HSP60) family. As to quaternary structure, forms a cylinder of 14 subunits composed of two heptameric rings stacked back-to-back. Interacts with the co-chaperonin GroES.

It localises to the cytoplasm. The enzyme catalyses ATP + H2O + a folded polypeptide = ADP + phosphate + an unfolded polypeptide.. In terms of biological role, together with its co-chaperonin GroES, plays an essential role in assisting protein folding. The GroEL-GroES system forms a nano-cage that allows encapsulation of the non-native substrate proteins and provides a physical environment optimized to promote and accelerate protein folding. The sequence is that of Chaperonin GroEL from Enterobacter agglomerans (Erwinia herbicola).